A 113-amino-acid chain; its full sequence is Hydrogenase maturation factor HypA (113 aa).

Residue His-2 coordinates Ni(2+). Cys-73, Cys-76, Cys-89, and Cys-92 together coordinate Zn(2+).

Belongs to the HypA/HybF family.

Functionally, involved in the maturation of [NiFe] hydrogenases. Required for nickel insertion into the metal center of the hydrogenase. This is Hydrogenase maturation factor HypA from Dechloromonas aromatica (strain RCB).